An 859-amino-acid polypeptide reads, in one-letter code: Probable helicase A859L (859 aa).

Residues 178-349 (YQELRRSGRA…KNRELFGGVA (172 aa)) enclose the Helicase ATP-binding domain. 191–198 (MACRCGKT) is a binding site for ATP. A DEAH box motif is present at residues 298–301 (DECH). A Helicase C-terminal domain is found at 394–553 (QIIMALAYLK…RFYEHLLNPS (160 aa)).

The protein belongs to the asfivirus helicase A859L family.

The chain is Probable helicase A859L from Ornithodoros (relapsing fever ticks).